Here is a 1134-residue protein sequence, read N- to C-terminus: Envelopment polyprotein (1134 aa).

Positions 1-16 (MWSLLLLAALVGQGFA) are cleaved as a signal peptide. The Lumenal portion of the chain corresponds to 17 to 484 (LKNVFDMRIQ…PGFHGWATAA (468 aa)). Intrachain disulfides connect C27–C149, C61–C155, C107–C126, C131–C136, C173–C183, C208–C245, C232–C349, C374–C433, C378–C387, and C403–C422. The N-linked (GlcNAc...) asparagine; by host glycan is linked to N132. N-linked (GlcNAc...) asparagine; by host glycosylation is found at N233 and N345. N-linked (GlcNAc...) asparagine; by host glycosylation occurs at N397. The chain crosses the membrane as a helical span at residues 485–504 (LLITFCFGWVLIPACTLAIL). Over 505–626 (LVLKFFANIL…NLFRYKSRCY (122 aa)) the chain is Cytoplasmic. The segment at 514 to 531 (LHTSNQENRFKAILRKIK) is binding to the ribonucleoprotein. CCHC-type zinc fingers lie at residues 543–563 (CEIC…NLSC) and 568–589 (CPYC…YKVC). Binding to the ribonucleoprotein regions lie at residues 586–603 (YKVC…KKTV), 590–601 (QATHRFREDLKK), and 609–623 (WARL…RYKS). In terms of domain architecture, ITAM spans 609–632 (WARLYRTLNLFRYKSRCYILTMWT). The YxxL signature appears at 613 to 616 (YRTL). Residues 627–647 (ILTMWTLLLIIESILWAASAA) form a helical membrane-spanning segment. At 648–1105 (EIPLVPLWTD…WVMGIINGNW (458 aa)) the chain is on the lumenal side. 8 cysteine pairs are disulfide-bonded: C734–C769, C738–C776, C750–C884, C764–C895, C779–C903, C805–C814, C822–C831, and C862–C866. Residues 756 to 776 (YEYENSWACNPPDCPGVGTGC) form a fusion loop region. An N-linked (GlcNAc...) asparagine; by host glycan is attached at N927. 5 cysteine pairs are disulfide-bonded: C969-C999, C992-C1044, C1009-C1014, C1045-C1050, and C1084-C1088. The chain crosses the membrane as a helical span at residues 1106 to 1125 (VVLIVLCVLLLFSLILLSIL). Residues 1121–1134 (LLSILCPVRKHKKS) form a binding to the ribonucleoprotein region. At 1126 to 1134 (CPVRKHKKS) the chain is on the cytoplasmic side.

This sequence belongs to the hantavirus envelope glycoprotein family. In terms of assembly, homodimer. Homotetramer; forms heterotetrameric Gn-Gc spikes in the pre-fusion conformation. Interacts (via C-terminus) with the nucleoprotein. Interacts with host TUFM; this interaction contributes to the virus-induced degradation of mitochondria by autophagy, which leads to degradation of host MAVS and inhibition of type I interferon (IFN) responses. Interacts with host MAP1LC3B; this interaction contributes to the virus-induced degradation of mitochondria by autophagy, which leads to degradation of host MAVS and inhibition of type I interferon (IFN) responses. As to quaternary structure, homodimer. Homotetramer; forms heterotetrameric Gn-Gc spikes in the pre-fusion conformation. Homotrimer; forms homotrimer in the post-fusion conformation at acidic pH. Interacts (via C-terminus) with the nucleoprotein. In terms of processing, envelope polyprotein precursor is quickly cleaved in vivo just after synthesis, presumably by host signal peptidase.

The protein localises to the virion membrane. Its subcellular location is the host cell surface. It is found in the host Golgi apparatus membrane. The protein resides in the host endoplasmic reticulum membrane. It localises to the host mitochondrion. Functionally, forms homotetramers with glycoprotein C at the surface of the virion. Attaches the virion to host cell receptors including integrin ITGAV/ITGB3. This attachment induces virion internalization predominantly through clathrin-dependent endocytosis. Mediates the assembly and budding of infectious virus particles through its interaction with the nucleocapsid protein and the viral genome. May dysregulate normal immune and endothelial cell responses through an ITAM motif. Translocates to mitochondria, binds to host TUFM and recruits MAP1LC3B. These interactions induce mitochondrial autophagy and therefore destruction of host MAVS leading to inhibition of type I interferon (IFN) responses. Concomitant breakdown of glycoprotein N is apparently prevented by the nucleoprotein that may inhibit Gn-stimulated autophagosome-lysosome fusion. Interacts with the viral genomic RNA. In terms of biological role, forms homotetramers with glycoprotein N at the surface of the virion. Attaches the virion to host cell receptors including integrin ITGAV/ITGB3. This attachment induces virion internalization predominantly through clathrin-dependent endocytosis. Class II fusion protein that promotes fusion of viral membrane with host endosomal membrane after endocytosis of the virion. The chain is Envelopment polyprotein (GP) from Homo sapiens (Human).